A 663-amino-acid polypeptide reads, in one-letter code: Methionine--tRNA ligase (663 aa).

Positions 10-20 match the 'HIGH' region motif; the sequence is AYTNGPLHLGH. Zn(2+)-binding residues include Cys-142, Cys-145, Cys-154, and Cys-157. A 'KMSKS' region motif is present at residues 323–327; that stretch reads KMSTS. Thr-326 lines the ATP pocket. One can recognise a tRNA-binding domain in the interval 563–663; sequence YFGNVDLRVG…RDLPVGSKIH (101 aa).

Belongs to the class-I aminoacyl-tRNA synthetase family. MetG type 1 subfamily. As to quaternary structure, homodimer. Zn(2+) is required as a cofactor.

It is found in the cytoplasm. It carries out the reaction tRNA(Met) + L-methionine + ATP = L-methionyl-tRNA(Met) + AMP + diphosphate. In terms of biological role, is required not only for elongation of protein synthesis but also for the initiation of all mRNA translation through initiator tRNA(fMet) aminoacylation. The protein is Methionine--tRNA ligase of Methanococcus maripaludis (strain C7 / ATCC BAA-1331).